A 290-amino-acid chain; its full sequence is Arylamine N-acetyltransferase 1 (290 aa).

M1 bears the N-acetylmethionine mark. C68 serves as the catalytic Acyl-thioester intermediate. S103 serves as a coordination point for CoA. 106-107 (IH) contacts substrate. Catalysis depends on residues H107 and D122. Residues Y208 and S287 each coordinate CoA.

This sequence belongs to the arylamine N-acetyltransferase family.

The protein localises to the cytoplasm. The enzyme catalyses an arylamine + acetyl-CoA = an N-acetylarylamine + CoA. Participates in the detoxification of a plethora of hydrazine and arylamine drugs. The protein is Arylamine N-acetyltransferase 1 (NAT1) of Mesocricetus auratus (Golden hamster).